Here is a 585-residue protein sequence, read N- to C-terminus: Arginine--tRNA ligase (585 aa).

The 'HIGH' region motif lies at 126–136 (PNIAKEMHVGH).

It belongs to the class-I aminoacyl-tRNA synthetase family. Monomer.

It is found in the cytoplasm. It carries out the reaction tRNA(Arg) + L-arginine + ATP = L-arginyl-tRNA(Arg) + AMP + diphosphate. This is Arginine--tRNA ligase from Cyanothece sp. (strain PCC 7425 / ATCC 29141).